Reading from the N-terminus, the 617-residue chain is Prothrombin (617 aa).

A signal peptide spans 1-24 (MLHVRGLGLPGCLALAALASLVHS). A propeptide spanning residues 25 to 43 (QHVFLAPQQALSLLQRVRR) is cleaved from the precursor. Residues 44–90 (ANSGFLEELRKGNLERECVEEQCSYEEAFEALESPQDTDVFWAKYTV) enclose the Gla domain. Glu50, Glu51, Glu58, Glu60, Glu63, Glu64, Glu69, Glu70, Glu73, and Glu76 each carry 4-carboxyglutamate. An intrachain disulfide couples Cys61 to Cys66. Cystine bridges form between Cys91/Cys104, Cys109/Cys187, Cys130/Cys170, Cys158/Cys182, Cys215/Cys292, Cys236/Cys276, Cys264/Cys287, Cys332/Cys478, Cys387/Cys403, and Cys532/Cys546. Kringle domains lie at 109 to 187 (CAMD…IPVC) and 215 to 292 (CLLE…LNYC). 2 N-linked (GlcNAc...) asparagine glycosylation sites follow: Asn120 and Asn144. Residues 360-614 (IVEGWDAEKG…LKRWMQKVID (255 aa)) enclose the Peptidase S1 domain. Catalysis depends on His402, which acts as the Charge relay system. An N-linked (GlcNAc...) asparagine glycan is attached at Asn412. Asp458 acts as the Charge relay system in catalysis. The interval 547–569 (AGFKVNDTKRGDACEGDSGGPFV) is high affinity receptor-binding region which is also known as the TP508 peptide. The N-linked (GlcNAc...) asparagine glycan is linked to Asn552. Cys560 and Cys590 are joined by a disulfide. Residue Ser564 is the Charge relay system of the active site.

It belongs to the peptidase S1 family. As to quaternary structure, heterodimer (named alpha-thrombin) of a light and a heavy chain; disulfide-linked. Forms a heterodimer with SERPINA5. In plasma, interacts (via N-terminus) with alpha-1-microglobulin; this interaction does not prevent the activation of prothrombin to thrombin. In terms of processing, the gamma-carboxyglutamyl residues, which bind calcium ions, result from the carboxylation of glutamyl residues by a microsomal enzyme, the vitamin K-dependent carboxylase. The modified residues are necessary for the calcium-dependent interaction with a negatively charged phospholipid surface, which is essential for the conversion of prothrombin to thrombin. Post-translationally, in the penultimate step of the coagulation cascade, prothrombin is converted to thrombin by the prothrombinase complex composed of factor Xa (F10), cofactor Va (F5), and phospholipids. This activation requires factor Xa-catalyzed sequential cleavage at 2 sites, Arg-310 and Arg-359, along 2 possible pathways. In the first pathway, the first cleavage occurs at Arg-310, leading to the formation of the inactive intermediate prethrombin-2. This pathway preferentially occurs on platelets and in the absence of cofactor Va. In the second pathway, the first cleavage occurs at Arg-359, which separates protease domain into 2 chains that remain connected through a disulfide bond and generates the active intermediate meizothrombin. The presence of cofactor Va directs activation along the meizothrombin pathway and greatly accelerates the rate of cleavage at Arg-359, but has a smaller effect on the cleavage of meizothrombin at Arg-310. Meizothrombin accumulates as an intermediate when prothrombinase is assembled on the membrane of red blood cells.

The catalysed reaction is Selective cleavage of Arg-|-Gly bonds in fibrinogen to form fibrin and release fibrinopeptides A and B.. Its activity is regulated as follows. Activity is promoted in the presence of negatively charged surfaces, such as polyphosphate and dextran sulfate. Inhibited by SERPINA5. Thrombin, which cleaves bonds after Arg and Lys, converts fibrinogen to fibrin and activates factors V, VII, VIII, XIII, and, in complex with thrombomodulin, protein C. Functions in blood homeostasis, inflammation and wound healing. Activates coagulation factor XI (F11); activation is promoted by the contact with negatively charged surfaces. Triggers the production of pro-inflammatory cytokines, such as MCP-1/CCL2 and IL8/CXCL8, in endothelial cells. This Rattus norvegicus (Rat) protein is Prothrombin (F2).